A 514-amino-acid polypeptide reads, in one-letter code: 2,3-bisphosphoglycerate-independent phosphoglycerate mutase (514 aa).

D15 and S65 together coordinate Mn(2+). S65 functions as the Phosphoserine intermediate in the catalytic mechanism. Substrate-binding positions include H126, 156–157, R188, R194, 261–264, and K335; these read RD and RADR. 5 residues coordinate Mn(2+): D403, H407, D444, H445, and H462.

Belongs to the BPG-independent phosphoglycerate mutase family. As to quaternary structure, monomer. It depends on Mn(2+) as a cofactor.

It catalyses the reaction (2R)-2-phosphoglycerate = (2R)-3-phosphoglycerate. Its pathway is carbohydrate degradation; glycolysis; pyruvate from D-glyceraldehyde 3-phosphate: step 3/5. Catalyzes the interconversion of 2-phosphoglycerate and 3-phosphoglycerate. The polypeptide is 2,3-bisphosphoglycerate-independent phosphoglycerate mutase (Syntrophotalea carbinolica (strain DSM 2380 / NBRC 103641 / GraBd1) (Pelobacter carbinolicus)).